Here is a 272-residue protein sequence, read N- to C-terminus: Methylesterase 8 (272 aa).

The active-site Acyl-ester intermediate is Ser-102. Residues Asp-222 and His-250 each act as charge relay system in the active site.

It belongs to the AB hydrolase superfamily. Methylesterase family.

Functionally, methylesterase shown to have carboxylesterase activity in vitro. This chain is Methylesterase 8, found in Arabidopsis thaliana (Mouse-ear cress).